The sequence spans 344 residues: Polyhomeotic-like protein 2 (344 aa).

Positions 1 to 23 (MTSGNGSSPVPTAATGNRTQNGE) are enriched in polar residues. A disordered region spans residues 1–28 (MTSGNGSSPVPTAATGNRTQNGENKPPQ). Residues 25 to 53 (KPPQAVVKPQILTHFIEGFVIQEGAQPFP) carry the HD1 motif. The FCS-type zinc-finger motif lies at 114–148 (GDGDPPKLKCELCGRVDFEYKFKRSKRFCSMACAK). C123, C126, C142, and C146 together coordinate Zn(2+). The disordered stretch occupies residues 165–269 (RSKLQKPTVA…LHSRDPIAMS (105 aa)). Positions 173 to 183 (VAKHARRRSRK) are enriched in basic residues. Polar residues predominate over residues 216-233 (KLSNSQEDSSRCSDNSSY). Residues 234–248 (EEPLSPMSASSSLSR) show a composition bias toward low complexity. An SAM domain is found at 280-344 (WNVEDVYDFV…YARISMLKDS (65 aa)).

Component of a PRC1-like complex.

The protein resides in the nucleus. Functionally, component of a Polycomb group (PcG) multiprotein PRC1-like complex, a complex class required to maintain the transcriptionally repressive state of many genes, including Hox genes, throughout development. PcG PRC1 complex acts via chromatin remodeling and modification of histones; it mediates monoubiquitination of histone H2A 'Lys-119', rendering chromatin heritably changed in its expressibility. The protein is Polyhomeotic-like protein 2 (phc2) of Xenopus laevis (African clawed frog).